The sequence spans 214 residues: Ependymin (214 aa).

A signal peptide spans 1 to 20 (MHTVKLLCVVFSCLCAVAWA). N-linked (GlcNAc...) asparagine glycosylation is found at asparagine 70 and asparagine 93.

The protein belongs to the ependymin family. As to quaternary structure, forms disulfide-linked dimers. Binds calcium through the terminal sialic acids.

It localises to the secreted. May play a role in neural plasticity. May be involved during axon regeneration. The polypeptide is Ependymin (epd) (Notemigonus crysoleucas (Golden shiner)).